Consider the following 258-residue polypeptide: Small ribosomal subunit protein uS2 (258 aa).

The interval 234 to 258 (ETANAEEAMQKAAAVEAAAEAAPAQ) is disordered. The segment covering 236–258 (ANAEEAMQKAAAVEAAAEAAPAQ) has biased composition (low complexity).

The protein belongs to the universal ribosomal protein uS2 family.

This Desulfovibrio desulfuricans (strain ATCC 27774 / DSM 6949 / MB) protein is Small ribosomal subunit protein uS2.